The primary structure comprises 336 residues: tRNA-cytidine(32) 2-sulfurtransferase (336 aa).

Residues 11–23 (TAAAPAGTGEATP) are compositionally biased toward low complexity. Positions 11-31 (TAAAPAGTGEATPVHARARSP) are disordered. The PP-loop motif signature appears at 75 to 80 (SGGKDS). [4Fe-4S] cluster contacts are provided by Cys-150, Cys-153, and Cys-241.

Belongs to the TtcA family. In terms of assembly, homodimer. Requires Mg(2+) as cofactor. [4Fe-4S] cluster is required as a cofactor.

The protein localises to the cytoplasm. The catalysed reaction is cytidine(32) in tRNA + S-sulfanyl-L-cysteinyl-[cysteine desulfurase] + AH2 + ATP = 2-thiocytidine(32) in tRNA + L-cysteinyl-[cysteine desulfurase] + A + AMP + diphosphate + H(+). The protein operates within tRNA modification. In terms of biological role, catalyzes the ATP-dependent 2-thiolation of cytidine in position 32 of tRNA, to form 2-thiocytidine (s(2)C32). The sulfur atoms are provided by the cysteine/cysteine desulfurase (IscS) system. This is tRNA-cytidine(32) 2-sulfurtransferase from Paraburkholderia xenovorans (strain LB400).